The chain runs to 437 residues: Arginine biosynthesis bifunctional protein ArgJ, mitochondrial (437 aa).

Thr-173, Lys-200, Thr-211, Glu-297, Asn-432, and Ser-437 together coordinate substrate. The Nucleophile role is filled by Thr-211.

The protein belongs to the ArgJ family. In terms of assembly, heterodimer of an alpha and a beta chain. The alpha and beta chains are autoproteolytically processed from a single precursor protein within the mitochondrion.

It is found in the mitochondrion matrix. The catalysed reaction is N(2)-acetyl-L-ornithine + L-glutamate = N-acetyl-L-glutamate + L-ornithine. It catalyses the reaction L-glutamate + acetyl-CoA = N-acetyl-L-glutamate + CoA + H(+). It participates in amino-acid biosynthesis; L-arginine biosynthesis; L-ornithine and N-acetyl-L-glutamate from L-glutamate and N(2)-acetyl-L-ornithine (cyclic): step 1/1. Its pathway is amino-acid biosynthesis; L-arginine biosynthesis; N(2)-acetyl-L-ornithine from L-glutamate: step 1/4. In terms of biological role, catalyzes two activities which are involved in the cyclic version of arginine biosynthesis: the synthesis of acetylglutamate from glutamate and acetyl-CoA, and of ornithine by transacetylation between acetylornithine and glutamate. This chain is Arginine biosynthesis bifunctional protein ArgJ, mitochondrial, found in Zygosaccharomyces rouxii (strain ATCC 2623 / CBS 732 / NBRC 1130 / NCYC 568 / NRRL Y-229).